The following is a 402-amino-acid chain: Caspase-1 (402 aa).

The CARD domain maps to 1 to 91 (MADKILRAKR…YLAGILELQS (91 aa)). The propeptide occupies 1 to 118 (MADKILRAKR…PSSSETKEEQ (118 aa)). Residues 98-125 (FVATEDSKGGHPSSSETKEEQNKEDGTF) are disordered. Basic and acidic residues predominate over residues 113-123 (ETKEEQNKEDG). Active-site residues include His-236 and Cys-284. The propeptide occupies 297 to 314 (SVRDSEEDFLTDAIFEDD). Ser-301 bears the Phosphoserine mark. At Arg-343 the chain carries Omega-N-methylarginine.

The protein belongs to the peptidase C14A family. As to quaternary structure, heterotetramer that consists of two anti-parallel arranged heterodimers, each one formed by a 20 kDa (Caspase-1 subunit p20) and a 10 kDa (Caspase-1 subunit p10) subunit. May be a component of the inflammasome, a protein complex which also includes PYCARD, CARD8 and NLRP2 and whose function would be the activation of pro-inflammatory caspases. Component of the AIM2 PANoptosome complex, a multiprotein complex that drives inflammatory cell death (PANoptosis). Both the p10 and p20 subunits interact with MEFV. Interacts with CARD17P/INCA and CARD18. Interacts with SERPINB1; this interaction regulates CASP1 activity. In terms of assembly, heterotetramer that consists of two anti-parallel arranged heterodimers, each one formed by a 20 kDa (Caspase-1 subunit p20) and a 10 kDa (Caspase-1 subunit p10) subunit. The two subunits are derived from the precursor sequence by an autocatalytic mechanism. In terms of processing, ubiquitinated via 'Lys-11'-linked polyubiquitination. Deubiquitinated by USP8. As to expression, high level expression seen in spleen and lung, low level expression seen in brain, heart, liver, kidney, testis and skeletal muscle.

Its subcellular location is the cytoplasm. It localises to the cell membrane. It catalyses the reaction Strict requirement for an Asp residue at position P1 and has a preferred cleavage sequence of Tyr-Val-Ala-Asp-|-.. Its function is as follows. Thiol protease involved in a variety of inflammatory processes by proteolytically cleaving other proteins, such as the precursors of the inflammatory cytokines interleukin-1 beta (IL1B) and interleukin 18 (IL18) as well as the pyroptosis inducer Gasdermin-D (GSDMD), into active mature peptides. Plays a key role in cell immunity as an inflammatory response initiator: once activated through formation of an inflammasome complex, it initiates a pro-inflammatory response through the cleavage of the two inflammatory cytokines IL1B and IL18, releasing the mature cytokines which are involved in a variety of inflammatory processes. Cleaves a tetrapeptide after an Asp residue at position P1. Also initiates pyroptosis, a programmed lytic cell death pathway, through cleavage of GSDMD. In contrast to cleavage of interleukin IL1B, recognition and cleavage of GSDMD is not strictly dependent on the consensus cleavage site but depends on an exosite interface on CASP1 that recognizes and binds the Gasdermin-D, C-terminal (GSDMD-CT) part. Cleaves and activates CASP7 in response to bacterial infection, promoting plasma membrane repair. Upon inflammasome activation, during DNA virus infection but not RNA virus challenge, controls antiviral immunity through the cleavage of CGAS, rendering it inactive. In apoptotic cells, cleaves SPHK2 which is released from cells and remains enzymatically active extracellularly. The sequence is that of Caspase-1 (Casp1) from Mus musculus (Mouse).